The chain runs to 261 residues: MVSYNVTNVWGLIVFFLCSFAVLAFFSFGKSNLMRLIAHYFNFGYSDKKLKRLDREWRDIQLFKIINGINVSGIENVRMIQQGLIDGKLKTSYFFLTRIWGDITKPPHIIKTIIVILASIFYILLACYIHNEQSVIVRDATGIPYKNMMYYVYSDKVLLSFKNKAVEFNKTYSLADCKRLQNVFIKDTLPEIACNKLLQLNEEDSEWLSQEIKDNNSHKKALLILSLVYFTSGLVIFLSYTKFFYANKKVLEYKASNKNHS.

This is an uncharacterized protein from Enterobacteriaceae (Bacteriophage P2).